The following is a 201-amino-acid chain: Imidazole glycerol phosphate synthase subunit HisH (201 aa).

Positions 1–201 (MIAIIDYGAG…LLKRYEEMIR (201 aa)) constitute a Glutamine amidotransferase type-1 domain. Cys-79 functions as the Nucleophile in the catalytic mechanism. Residues His-181 and Glu-183 contribute to the active site.

Heterodimer of HisH and HisF.

The protein resides in the cytoplasm. The enzyme catalyses 5-[(5-phospho-1-deoxy-D-ribulos-1-ylimino)methylamino]-1-(5-phospho-beta-D-ribosyl)imidazole-4-carboxamide + L-glutamine = D-erythro-1-(imidazol-4-yl)glycerol 3-phosphate + 5-amino-1-(5-phospho-beta-D-ribosyl)imidazole-4-carboxamide + L-glutamate + H(+). It catalyses the reaction L-glutamine + H2O = L-glutamate + NH4(+). It functions in the pathway amino-acid biosynthesis; L-histidine biosynthesis; L-histidine from 5-phospho-alpha-D-ribose 1-diphosphate: step 5/9. In terms of biological role, IGPS catalyzes the conversion of PRFAR and glutamine to IGP, AICAR and glutamate. The HisH subunit catalyzes the hydrolysis of glutamine to glutamate and ammonia as part of the synthesis of IGP and AICAR. The resulting ammonia molecule is channeled to the active site of HisF. This chain is Imidazole glycerol phosphate synthase subunit HisH, found in Oceanobacillus iheyensis (strain DSM 14371 / CIP 107618 / JCM 11309 / KCTC 3954 / HTE831).